Reading from the N-terminus, the 274-residue chain is Large ribosomal subunit protein uL2 (274 aa).

The interval 223–258 is disordered; that stretch reads VAMNPVDHPHGGGEGRTSGGRHPVTPWGIPTKGYKT.

It belongs to the universal ribosomal protein uL2 family. As to quaternary structure, part of the 50S ribosomal subunit. Forms a bridge to the 30S subunit in the 70S ribosome.

Its function is as follows. One of the primary rRNA binding proteins. Required for association of the 30S and 50S subunits to form the 70S ribosome, for tRNA binding and peptide bond formation. It has been suggested to have peptidyltransferase activity; this is somewhat controversial. Makes several contacts with the 16S rRNA in the 70S ribosome. This is Large ribosomal subunit protein uL2 from Pelobacter propionicus (strain DSM 2379 / NBRC 103807 / OttBd1).